We begin with the raw amino-acid sequence, 234 residues long: Large ribosomal subunit protein uL1 (234 aa).

It belongs to the universal ribosomal protein uL1 family. Part of the 50S ribosomal subunit.

Binds directly to 23S rRNA. The L1 stalk is quite mobile in the ribosome, and is involved in E site tRNA release. In terms of biological role, protein L1 is also a translational repressor protein, it controls the translation of the L11 operon by binding to its mRNA. The polypeptide is Large ribosomal subunit protein uL1 (Vibrio atlanticus (strain LGP32) (Vibrio splendidus (strain Mel32))).